Here is a 516-residue protein sequence, read N- to C-terminus: MRTKLPMDFPISKMPHLPSLPVSLSFLLFFLMLVRYWKNSKGQGKPPPGPRPLPILGNLHQLADGLPHHAVTKLCRKYGPVLKLKLGQLDVVVISSPEVAKEVLKTNEINFAQRPEVYAVEIMSYDHSSIVFSPYGDYWREMRKISVLELLSNRRVLSFRSIREDEVWNLVEFLSSSDERTINLSEKIFSMTNDIISRAAFGRKCNDQHNFTVLLEEIMKIGAGFAIADLYPSLTFLRPLTGVKPALMRIQNKMDKILEDIVTEHRIKRKAAANSNIKFEEEDLVDTLLNYAEANKDEFHLTLDQVKAVTLDIFSAGSETSATSMEWAMSELLKNPRVMKKAQEEVRQACKGKSKIREADIQKLDYLKLVIKETFRLHAPGPFTPRESRERCEIGGYTIPAKAKVLINLHAMGRDPTIWTDPDCFQPERFQGSSVDFKGNHFELIPFGGGRRICPGISFATANIELGLAQMLYHFDWKLPNGKKLEDLDMSENFGMTARRKENLQVIATTHIPFQK.

Residues 14-34 traverse the membrane as a helical segment; it reads MPHLPSLPVSLSFLLFFLMLV. Cys454 lines the heme pocket.

Belongs to the cytochrome P450 family. Heme serves as cofactor. As to expression, mainly expressed in roots and, to a lesser extent, in stems and old leaves.

The protein resides in the membrane. The enzyme catalyses dihydroniloticin + 2 reduced [NADPH--hemoprotein reductase] + 2 O2 = melianol + 2 oxidized [NADPH--hemoprotein reductase] + 3 H2O + 2 H(+). The protein operates within secondary metabolite biosynthesis; terpenoid biosynthesis. Its function is as follows. Monooxygenase involved in the biosynthesis of quassinoids triterpene natural products such as ailanthone, chaparrinone, glaucarubinone and amarolide, allelopathic degraded triterpene lactones inhibiting the growth of other plants, and possessing antimalarial, antifeedant, insecticidal, anti-inflammatory and anticancer activities. Catalyzes the conversion of dihydroniloticin to the protolimonoid melianol. In Ailanthus altissima (Tree-of-heaven), this protein is Melianol synthase CYP71BQ17.